A 253-amino-acid polypeptide reads, in one-letter code: Demethylmenaquinone methyltransferase (253 aa).

S-adenosyl-L-methionine contacts are provided by residues Thr-62, Asp-80, 102–103 (DA), and Ser-119.

This sequence belongs to the class I-like SAM-binding methyltransferase superfamily. MenG/UbiE family.

It catalyses the reaction a 2-demethylmenaquinol + S-adenosyl-L-methionine = a menaquinol + S-adenosyl-L-homocysteine + H(+). It participates in quinol/quinone metabolism; menaquinone biosynthesis; menaquinol from 1,4-dihydroxy-2-naphthoate: step 2/2. Functionally, methyltransferase required for the conversion of demethylmenaquinol (DMKH2) to menaquinol (MKH2). This Paenarthrobacter aurescens (strain TC1) protein is Demethylmenaquinone methyltransferase.